The primary structure comprises 964 residues: Syndetin (964 aa).

Met1 is subject to N-acetylmethionine. The tract at residues 1–25 is disordered; that stretch reads MQKIKSLMTRQGLKSPPESLNDLGA. Ser15 carries the phosphoserine modification. 2 coiled-coil regions span residues 81–107 and 216–244; these read LNLQ…VADL and YSCI…LSKI. Phosphoserine occurs at positions 494, 498, 559, and 561. Residues 532–563 form a disordered region; that stretch reads DEETEDVLASNGYESDEQEKSAYQDYDSDSDV. Residue Lys963 forms a Glycyl lysine isopeptide (Lys-Gly) (interchain with G-Cter in SUMO1); alternate linkage. A Glycyl lysine isopeptide (Lys-Gly) (interchain with G-Cter in SUMO2); alternate cross-link involves residue Lys963.

Belongs to the syndetin family. In terms of assembly, component of the endosome-associated retrograde protein (EARP) complex, composed of VPS51, VPS52, VPS53 and VPS50/Syndetin. The EARP complex interacts with EIPR1. Interacts with VPS51 and VPS53 in an EIPR1-independent manner. Expressed in the brain (at protein level).

The protein localises to the recycling endosome. It localises to the membrane. In terms of biological role, acts as a component of the EARP complex that is involved in endocytic recycling. The EARP complex associates with Rab4-positive endosomes and promotes recycling of internalized transferrin receptor (TFRC) to the plasma membrane. Within the EARP complex, required to tether the complex to recycling endosomes. Not involved in retrograde transport from early and late endosomes to the trans-Golgi network (TGN). This Rattus norvegicus (Rat) protein is Syndetin.